The sequence spans 121 residues: UPF0102 protein HRM2_30940 (121 aa).

The protein belongs to the UPF0102 family.

This is UPF0102 protein HRM2_30940 from Desulforapulum autotrophicum (strain ATCC 43914 / DSM 3382 / VKM B-1955 / HRM2) (Desulfobacterium autotrophicum).